We begin with the raw amino-acid sequence, 190 residues long: Orotate phosphoribosyltransferase (190 aa).

114–122 (EDVVTTGGS) contributes to the 5-phospho-alpha-D-ribose 1-diphosphate binding site. Residues Thr118 and Arg146 each coordinate orotate.

It belongs to the purine/pyrimidine phosphoribosyltransferase family. PyrE subfamily. As to quaternary structure, homodimer. Requires Mg(2+) as cofactor.

The enzyme catalyses orotidine 5'-phosphate + diphosphate = orotate + 5-phospho-alpha-D-ribose 1-diphosphate. It functions in the pathway pyrimidine metabolism; UMP biosynthesis via de novo pathway; UMP from orotate: step 1/2. In terms of biological role, catalyzes the transfer of a ribosyl phosphate group from 5-phosphoribose 1-diphosphate to orotate, leading to the formation of orotidine monophosphate (OMP). The sequence is that of Orotate phosphoribosyltransferase from Thermoanaerobacter sp. (strain X514).